Consider the following 81-residue polypeptide: Centromere protein X (81 aa).

M1 is modified (N-acetylmethionine).

The protein belongs to the CENP-X/MHF2 family. Heterodimer with CENPX, sometimes called MHF; this interaction stabilizes both partners. MHF heterodimers can assemble to form tetrameric structures. MHF also coassemble with CENPT-CENPW heterodimers at centromeres to form the tetrameric CENP-T-W-S-X complex. Forms a discrete complex with FANCM and CENPX, called FANCM-MHF; this interaction, probably mediated by direct binding between CENPS and FANCM, leads to synergistic activation of double-stranded DNA binding and strongly stimulates FANCM-mediated DNA remodeling. Recruited by FANCM to the Fanconi anemia (FA) core complex, which consists of CENPS, CENPX, FANCA, FANCB, FANCC, FANCE, FANCF, FANCG, FANCL, FANCM, FAAP24 and FAAP100. The FA core complex associates with Bloom syndrome (BLM) complex, which consists of at least BLM, DNA topoisomerase 3-alpha (TOP3A), RMI1/BLAP75, RPA1/RPA70 and RPA2/RPA32. The super complex between FA and BLM is called BRAFT.

It localises to the nucleus. Its subcellular location is the chromosome. The protein resides in the centromere. It is found in the kinetochore. Functionally, DNA-binding component of the Fanconi anemia (FA) core complex. Required for the normal activation of the FA pathway, leading to monoubiquitination of the FANCI-FANCD2 complex in response to DNA damage, cellular resistance to DNA cross-linking drugs, and prevention of chromosomal breakage. In complex with CENPS (MHF heterodimer), crucial cofactor for FANCM in both binding and ATP-dependent remodeling of DNA. Stabilizes FANCM. In complex with CENPS and FANCM (but not other FANC proteins), rapidly recruited to blocked forks and promotes gene conversion at blocked replication forks. In complex with CENPS, CENPT and CENPW (CENP-T-W-S-X heterotetramer), involved in the formation of a functional kinetochore outer plate, which is essential for kinetochore-microtubule attachment and faithful mitotic progression. As a component of MHF and CENP-T-W-S-X complexes, binds DNA and bends it to form a nucleosome-like structure. DNA-binding function is fulfilled in the presence of CENPS, with the following preference for DNA substates: Holliday junction &gt; double-stranded &gt; splay arm &gt; single-stranded. Does not bind DNA on its own. This chain is Centromere protein X (CENPX), found in Pongo abelii (Sumatran orangutan).